A 196-amino-acid chain; its full sequence is 3-isopropylmalate dehydratase small subunit (196 aa).

The protein belongs to the LeuD family. LeuD type 1 subfamily. As to quaternary structure, heterodimer of LeuC and LeuD.

It carries out the reaction (2R,3S)-3-isopropylmalate = (2S)-2-isopropylmalate. It functions in the pathway amino-acid biosynthesis; L-leucine biosynthesis; L-leucine from 3-methyl-2-oxobutanoate: step 2/4. Catalyzes the isomerization between 2-isopropylmalate and 3-isopropylmalate, via the formation of 2-isopropylmaleate. The protein is 3-isopropylmalate dehydratase small subunit of Streptococcus thermophilus (strain CNRZ 1066).